The following is a 109-amino-acid chain: Hainantoxin-XVIII.2 (109 aa).

Residues 1–18 (MKLSIIIIVTSLVIAVVA) form the signal peptide. Residues 19–46 (FPSKDSKAIENDKTEQRMEIVVQETARA) constitute a propeptide that is removed on maturation. 4 disulfides stabilise this stretch: cysteine 47-cysteine 62, cysteine 55-cysteine 68, cysteine 59-cysteine 108, and cysteine 61-cysteine 81.

It belongs to the neurotoxin 25 family. F7 subfamily. Expressed by the venom gland.

The protein localises to the secreted. Its function is as follows. Putative ion channel inhibitor. In Cyriopagopus hainanus (Chinese bird spider), this protein is Hainantoxin-XVIII.2.